Here is a 267-residue protein sequence, read N- to C-terminus: Outer membrane protein assembly factor BamD (267 aa).

Residues 1-16 (MKKILLTVSLGLALSA) form the signal peptide. Cys-17 carries N-palmitoyl cysteine lipidation. Cys-17 carries S-diacylglycerol cysteine lipidation.

The protein belongs to the BamD family. As to quaternary structure, part of the Bam complex.

It is found in the cell outer membrane. In terms of biological role, part of the outer membrane protein assembly complex, which is involved in assembly and insertion of beta-barrel proteins into the outer membrane. Required for efficient transformation of Neisseria gonorrhoeae by species-related DNA. This is Outer membrane protein assembly factor BamD from Neisseria gonorrhoeae.